Consider the following 336-residue polypeptide: Phenylalanine--tRNA ligase alpha subunit (336 aa).

Glutamate 255 contacts Mg(2+).

It belongs to the class-II aminoacyl-tRNA synthetase family. Phe-tRNA synthetase alpha subunit type 1 subfamily. Tetramer of two alpha and two beta subunits. It depends on Mg(2+) as a cofactor.

The protein localises to the cytoplasm. The catalysed reaction is tRNA(Phe) + L-phenylalanine + ATP = L-phenylalanyl-tRNA(Phe) + AMP + diphosphate + H(+). The protein is Phenylalanine--tRNA ligase alpha subunit of Gemmatimonas aurantiaca (strain DSM 14586 / JCM 11422 / NBRC 100505 / T-27).